Here is a 421-residue protein sequence, read N- to C-terminus: 4'-demethylrebeccamycin synthase (421 aa).

The protein belongs to the glycosyltransferase 28 family.

The enzyme catalyses 4'-demethylrebeccamycin + H2O = dichloroarcyriaflavin A + beta-D-glucose. Its pathway is alkaloid biosynthesis. Catalyzes the penultimate step in the biosynthesis of rebeccamycin, an indolocarbazole alkaloid that inhibits topoisomerase 1. Has a wide substrate range, including staurosporine aglycone, EJG-III-108A, J-104303, 6-N-methyl-arcyriaflavin and indolo-[2,3-a]-carbazole. This is 4'-demethylrebeccamycin synthase (rebG) from Lentzea aerocolonigenes (Lechevalieria aerocolonigenes).